A 507-amino-acid chain; its full sequence is E3 ubiquitin-protein ligase makorin-3 (507 aa).

A compositionally biased stretch (low complexity) spans 1–21 (MEEPAAPSEAHEAAGAQAGAE). 2 disordered regions span residues 1-48 (MEEP…DSAL) and 69-89 (RGGLRPAPASGGGAWPSPLPS). The C3H1-type 1 zinc-finger motif lies at 95–122 (WTKQIICRYYIHGQCKEGENCRYSHDLS). Positions 126–149 (MATEGGVSPPGASAGGGPSTAAHI) are disordered. Residues 238 to 265 (GSGLRFCYYASRGVCFRGESCMYLHGDI) form a C3H1-type 2 zinc finger. The tract at residues 266–293 (CDMCGLQTLHPMDAAQREEHMRACIEAH) is makorin-type Cys-His. An RING-type zinc finger spans residues 311–365 (CGICMEVVYEKANPNDRRFGILSNCNHSFCIRCIRRWRSARQFENRIVKSCPQCR). Residues 394–423 (AMSNKACRYFAEGRGNCPFGDTCFYKHEYP) form a C3H1-type 3 zinc finger.

Ubiquitous.

Its subcellular location is the nucleus. It catalyses the reaction S-ubiquitinyl-[E2 ubiquitin-conjugating enzyme]-L-cysteine + [acceptor protein]-L-lysine = [E2 ubiquitin-conjugating enzyme]-L-cysteine + N(6)-ubiquitinyl-[acceptor protein]-L-lysine.. The protein operates within protein modification; protein ubiquitination. Functionally, E3 ubiquitin ligase catalyzing the covalent attachment of ubiquitin moieties onto substrate proteins. Acts as a key developmental timer that helps ensure puberty begins at the appropriate age, by inhibiting premature activation of the reproductive hormone cascade. Epigenetically regulates GNRH1 transcription by disrupting the binding of methyl-DNA binding protein 3/MBD3 to the promoter of GNRH1. Mechanistically, mediates the non-proteolytic ubiquitination of MBD3 at multiple sites with 'Lys27' ubiquitin linkages and thereby regulates the methylation status of the genome, including GNRH1 promoter. Modulates the stability and translation of GNRH1 mRNA by mediating the non-proteolytic ubiquitination of PABP family members PABPC1, PABPC3 and PABPC4 at multiple sites. Also participates in the maintenance of genomic and epigenomic stability by regulating the abundance of APEX2 via 'Lys-48'-linked ubiquitination. The chain is E3 ubiquitin-protein ligase makorin-3 (MKRN3) from Homo sapiens (Human).